Reading from the N-terminus, the 338-residue chain is 1-aminocyclopropane-1-carboxylate deaminase (338 aa).

Position 51 is an N6-(pyridoxal phosphate)lysine (Lys-51). Ser-78 functions as the Nucleophile in the catalytic mechanism.

The protein belongs to the ACC deaminase/D-cysteine desulfhydrase family. In terms of assembly, homotrimer. Requires pyridoxal 5'-phosphate as cofactor.

The catalysed reaction is 1-aminocyclopropane-1-carboxylate + H2O = 2-oxobutanoate + NH4(+). Functionally, catalyzes a cyclopropane ring-opening reaction, the irreversible conversion of 1-aminocyclopropane-1-carboxylate (ACC) to ammonia and alpha-ketobutyrate. Allows growth on ACC as a nitrogen source. The sequence is that of 1-aminocyclopropane-1-carboxylate deaminase from Ralstonia pickettii (strain 12J).